Here is a 396-residue protein sequence, read N- to C-terminus: Tryptophan synthase beta chain (396 aa).

Lys86 carries the post-translational modification N6-(pyridoxal phosphate)lysine.

It belongs to the TrpB family. As to quaternary structure, tetramer of two alpha and two beta chains. Pyridoxal 5'-phosphate serves as cofactor.

It catalyses the reaction (1S,2R)-1-C-(indol-3-yl)glycerol 3-phosphate + L-serine = D-glyceraldehyde 3-phosphate + L-tryptophan + H2O. Its pathway is amino-acid biosynthesis; L-tryptophan biosynthesis; L-tryptophan from chorismate: step 5/5. In terms of biological role, the beta subunit is responsible for the synthesis of L-tryptophan from indole and L-serine. This is Tryptophan synthase beta chain from Vibrio atlanticus (strain LGP32) (Vibrio splendidus (strain Mel32)).